The chain runs to 563 residues: Cysteine--tRNA ligase, chloroplastic/mitochondrial (563 aa).

Cysteine 91 serves as a coordination point for Zn(2+). Residue glycine 92 participates in L-cysteine binding. Residues 93-103 (VTAYDLSHIGH) carry the 'HIGH' region motif. Residue threonine 131 coordinates L-cysteine. Positions 136 to 139 (KIIA) match the 'KIIK' region motif. Zn(2+) is bound by residues cysteine 271, histidine 296, and glutamate 300. Histidine 296 is a binding site for L-cysteine. Positions 328-332 (KMSKS) match the 'KMSKS' region motif. Lysine 331 contributes to the ATP binding site.

The protein belongs to the class-I aminoacyl-tRNA synthetase family. Zn(2+) is required as a cofactor.

Its subcellular location is the plastid. It is found in the chloroplast. The protein localises to the mitochondrion. The enzyme catalyses tRNA(Cys) + L-cysteine + ATP = L-cysteinyl-tRNA(Cys) + AMP + diphosphate. Required for female gametophyte development. Is necessary for the fusion of central cell nuclei and programmed cell death (PCD) of the antipodals. This is Cysteine--tRNA ligase, chloroplastic/mitochondrial from Arabidopsis thaliana (Mouse-ear cress).